Reading from the N-terminus, the 199-residue chain is Transgelin-3 (199 aa).

A Calponin-homology (CH) domain is found at 24–136 (ADLENKLVDW…RTLMALGSVA (113 aa)). Serine 163 carries the phosphoserine modification. A Calponin-like repeat occupies 174 to 199 (IGLQMGSNKGASQAGMTGYGMPRQIM). The segment covering 176–188 (LQMGSNKGASQAG) has biased composition (polar residues). A disordered region spans residues 176-199 (LQMGSNKGASQAGMTGYGMPRQIM).

It belongs to the calponin family.

The polypeptide is Transgelin-3 (TAGLN3) (Pongo abelii (Sumatran orangutan)).